A 180-amino-acid chain; its full sequence is Orotate phosphoribosyltransferase (180 aa).

5-phospho-alpha-D-ribose 1-diphosphate-binding positions include Arg-95, Lys-96, Lys-99, and 121–129; that span reads EDVTTTGGS. Orotate contacts are provided by Thr-125 and Arg-153.

The protein belongs to the purine/pyrimidine phosphoribosyltransferase family. PyrE subfamily. As to quaternary structure, homodimer. Mg(2+) is required as a cofactor.

The catalysed reaction is orotidine 5'-phosphate + diphosphate = orotate + 5-phospho-alpha-D-ribose 1-diphosphate. Its pathway is pyrimidine metabolism; UMP biosynthesis via de novo pathway; UMP from orotate: step 1/2. In terms of biological role, catalyzes the transfer of a ribosyl phosphate group from 5-phosphoribose 1-diphosphate to orotate, leading to the formation of orotidine monophosphate (OMP). The protein is Orotate phosphoribosyltransferase of Methanothermobacter thermautotrophicus (strain ATCC 29096 / DSM 1053 / JCM 10044 / NBRC 100330 / Delta H) (Methanobacterium thermoautotrophicum).